Here is a 36-residue protein sequence, read N- to C-terminus: Neurotoxin PRTx26An0C3 (36 aa).

3 disulfide bridges follow: C3–C17, C10–C22, and C16–C34.

In terms of tissue distribution, expressed by the venom gland.

The protein localises to the secreted. Its function is as follows. Neurotoxin. Causes spastic paralysis and death in mice. Moderate inhibitor of L-type calcium channels (Cav1/CACNA1). In Phoneutria nigriventer (Brazilian armed spider), this protein is Neurotoxin PRTx26An0C3.